Here is a 25-residue protein sequence, read N- to C-terminus: Small ribosomal subunit protein eS32 (25 aa).

The segment at methionine 1–lysine 25 is disordered.

This sequence belongs to the eukaryotic ribosomal protein eS32 family. Component of the large ribosomal subunit.

This chain is Small ribosomal subunit protein eS32 (rpl41), found in Agaricus bisporus (White button mushroom).